A 132-amino-acid polypeptide reads, in one-letter code: Agouti-signaling protein (132 aa).

A signal peptide spans 1-22 (MDVTRLLLATLLVFLCFFTVYS). Residue Asn-39 is glycosylated (N-linked (GlcNAc...) asparagine). The segment at 62–93 (ISRKEAEKKRSSKKEASMKKVAQPRTPLSAPC) is disordered. Residues 63–79 (SRKEAEKKRSSKKEASM) show a composition bias toward basic and acidic residues. 5 cysteine pairs are disulfide-bonded: Cys-93-Cys-108, Cys-100-Cys-114, Cys-107-Cys-125, Cys-111-Cys-132, and Cys-116-Cys-123. Positions 93-132 (CVATRDSCKPPAPACCDPCASCQCRFFRSACSCRVLSLNC) constitute an Agouti domain.

The protein resides in the secreted. In terms of biological role, involved in the regulation of melanogenesis. The binding of ASP to MC1R precludes alpha-MSH initiated signaling and thus blocks production of cAMP, leading to a down-regulation of eumelanogenesis (brown/black pigment) and thus increasing synthesis of pheomelanin (yellow/red pigment). The polypeptide is Agouti-signaling protein (ASIP) (Trachypithecus auratus (Javan langur)).